The chain runs to 188 residues: Cytochrome c-type protein NrfB (188 aa).

The first 32 residues, 1–32 (MSVLRSLLTAGVLASGLLWSLNGITATPAAQA), serve as a signal peptide directing secretion. 15 residues coordinate heme: Cys49, Cys52, His53, Cys78, Cys81, His82, Cys113, Cys116, His117, Cys138, Cys141, His142, Cys163, Cys166, and His167.

Binds 5 heme groups per subunit.

It localises to the periplasm. The protein operates within energy metabolism; nitrogen metabolism. Its function is as follows. Plays a role in nitrite reduction. The protein is Cytochrome c-type protein NrfB (nrfB) of Escherichia coli O6:H1 (strain CFT073 / ATCC 700928 / UPEC).